Consider the following 163-residue polypeptide: Photosystem II extrinsic protein V (163 aa).

Residues 1–26 (MLRKLILITVATVFFACQLLVNPVSA) form the signal peptide. Heme c is bound by residues C63, C66, H67, and H118.

The protein belongs to the cytochrome c family. PsbV subfamily. PSII is composed of 1 copy each of membrane proteins PsbA, PsbB, PsbC, PsbD, PsbE, PsbF, PsbH, PsbI, PsbJ, PsbK, PsbL, PsbM, PsbT, PsbX, PsbY, PsbZ, Psb30/Ycf12, peripheral proteins PsbO, CyanoQ (PsbQ), PsbU, PsbV and a large number of cofactors. It forms dimeric complexes. The cofactor is heme c.

The protein resides in the cellular thylakoid membrane. One of the extrinsic, lumenal subunits of photosystem II (PSII). PSII is a light-driven water plastoquinone oxidoreductase, using light energy to abstract electrons from H(2)O, generating a proton gradient subsequently used for ATP formation. The extrinsic proteins stabilize the structure of photosystem II oxygen-evolving complex (OEC), the ion environment of oxygen evolution and protect the OEC against heat-induced inactivation. Low-potential cytochrome c that plays a role in the OEC of PSII. This chain is Photosystem II extrinsic protein V, found in Aphanothece halophytica.